We begin with the raw amino-acid sequence, 597 residues long: Alkyldihydroxyacetonephosphate synthase (597 aa).

In terms of domain architecture, FAD-binding PCMH-type spans 131–313 (IPRLPDIVVW…SEVTIKIFPI (183 aa)). Residues 163–169 (PIGGGTS), 232–238 (DSIEFST), 245–248 (TRAS), and 297–303 (EGTLGVV) each bind FAD. Residue R444 coordinates substrate. Y507 serves as the catalytic Proton donor/acceptor. The tract at residues 544–546 (HHH) is important for enzyme activity. The short motif at 595–597 (CKL) is the Microbody targeting signal element.

Belongs to the FAD-binding oxidoreductase/transferase type 4 family. As to quaternary structure, homodimer. The cofactor is FAD.

The protein resides in the peroxisome. It catalyses the reaction a long chain fatty alcohol + a 1-acylglycerone 3-phosphate = a 1-O-alkylglycerone 3-phosphate + a long-chain fatty acid + H(+). Its pathway is glycerolipid metabolism; ether lipid biosynthesis. Catalyzes the exchange of an acyl for a long-chain alkyl group and the formation of the ether bond in the biosynthesis of ether phospholipids. The protein is Alkyldihydroxyacetonephosphate synthase (ads-1) of Caenorhabditis elegans.